We begin with the raw amino-acid sequence, 134 residues long: L-ectoine synthase (134 aa).

This sequence belongs to the ectoine synthase family.

The catalysed reaction is (2S)-4-acetamido-2-aminobutanoate = L-ectoine + H2O. It participates in amine and polyamine biosynthesis; ectoine biosynthesis; L-ectoine from L-aspartate 4-semialdehyde: step 3/3. Its function is as follows. Catalyzes the circularization of gamma-N-acetyl-alpha,gamma-diaminobutyric acid (ADABA) to ectoine (1,4,5,6-tetrahydro-2-methyl-4-pyrimidine carboxylic acid), which is an excellent osmoprotectant. This chain is L-ectoine synthase (ectC), found in Sporosarcina pasteurii (Bacillus pasteurii).